The following is a 174-amino-acid chain: Large ribosomal subunit protein uL5 (174 aa).

It belongs to the universal ribosomal protein uL5 family. As to quaternary structure, part of the 50S ribosomal subunit; contacts the 5S rRNA and probably tRNA. Forms a bridge to the 30S subunit in the 70S ribosome.

Functionally, this is one of the proteins that bind and probably mediate the attachment of the 5S RNA into the large ribosomal subunit, where it forms part of the central protuberance. In the 70S ribosome it contacts protein S13 of the 30S subunit (bridge B1b), connecting the 2 subunits; this bridge is implicated in subunit movement. May contact the P site tRNA; the 5S rRNA and some of its associated proteins might help stabilize positioning of ribosome-bound tRNAs. This Halorubrum lacusprofundi (strain ATCC 49239 / DSM 5036 / JCM 8891 / ACAM 34) protein is Large ribosomal subunit protein uL5.